A 215-amino-acid chain; its full sequence is Phosphoserine phosphatase (215 aa).

The active-site Nucleophile is the Asp-11. Residues Asp-11 and Asp-13 each contribute to the Mg(2+) site. Asp-13 acts as the Proton donor in catalysis. Residues Glu-20, Arg-56, 99–100 (SG), and Lys-144 contribute to the substrate site. Asp-167 is a Mg(2+) binding site. A substrate-binding site is contributed by Asn-170.

It belongs to the HAD-like hydrolase superfamily. SerB family. The cofactor is Mg(2+).

It catalyses the reaction O-phospho-L-serine + H2O = L-serine + phosphate. It carries out the reaction O-phospho-D-serine + H2O = D-serine + phosphate. Its pathway is amino-acid biosynthesis; L-serine biosynthesis; L-serine from 3-phospho-D-glycerate: step 3/3. This Streptococcus thermophilus (strain ATCC BAA-250 / LMG 18311) protein is Phosphoserine phosphatase.